Consider the following 496-residue polypeptide: Alpha-amylase (496 aa).

An intrachain disulfide couples cysteine 29 to cysteine 85. Ca(2+) is bound by residues asparagine 99, arginine 155, and aspartate 164. Arginine 192 is a binding site for chloride. Aspartate 194 functions as the Nucleophile in the catalytic mechanism. Histidine 198 contributes to the Ca(2+) binding site. Residue glutamate 230 is the Proton donor of the active site. Arginine 332 contributes to the chloride binding site. 2 cysteine pairs are disulfide-bonded: cysteine 374–cysteine 380 and cysteine 448–cysteine 460.

Belongs to the glycosyl hydrolase 13 family. Monomer. Ca(2+) serves as cofactor. It depends on chloride as a cofactor. Disulfide bonds are present.

It is found in the secreted. It catalyses the reaction Endohydrolysis of (1-&gt;4)-alpha-D-glucosidic linkages in polysaccharides containing three or more (1-&gt;4)-alpha-linked D-glucose units.. Inhibited by alpha-amylase inhibitors from wheat and rye. The most effective inhibitors are the wheat tetrameric alpha-amylase inhibitor (WTAI) and the rye dimeric alpha-amylase inhibitor (RDAI-1). Not inhibited by alpha-amylase inhibitor from barley. In terms of biological role, aids in the digestion of starch and glycogen derived from food, such as skin scales, fungi and bacteria. In Dermatophagoides pteronyssinus (European house dust mite), this protein is Alpha-amylase.